A 557-amino-acid chain; its full sequence is Fanconi anemia group C protein homolog (557 aa).

Belongs to the multisubunit FA complex composed of FANCA, FANCB, FANCC, FANCE, FANCF, FANCG, FANCL/PHF9 and FANCM. This complex may also include HSP70. Interacts with ZBTB32. Upon IFNG induction, interacts with STAT1. Interacts with CDK1. Interacts with EIF2AK2.

It is found in the nucleus. It localises to the cytoplasm. Functionally, DNA repair protein that may operate in a postreplication repair or a cell cycle checkpoint function. May be implicated in interstrand DNA cross-link repair and in the maintenance of normal chromosome stability. Upon IFNG induction, may facilitate STAT1 activation by recruiting STAT1 to IFNGR1. This Rattus norvegicus (Rat) protein is Fanconi anemia group C protein homolog (Fancc).